Consider the following 478-residue polypeptide: Zinc metalloproteinase/disintegrin (478 aa).

Positions 1–20 are cleaved as a signal peptide; the sequence is MIQVLLVTICLAVFPYQGSS. The propeptide occupies 21-194; it reads KTLKSGNVND…KASQLNLTPE (174 aa). Residue Gln195 is modified to Pyrrolidone carboxylic acid. The Peptidase M12B domain maps to 201–397; that stretch reads RYIELVIVAD…RNPQCILNQP (197 aa). Residues Glu204 and Asp288 each coordinate Ca(2+). Intrachain disulfides connect Cys312–Cys392, Cys352–Cys376, and Cys354–Cys359. Residue His337 coordinates Zn(2+). Glu338 is an active-site residue. Zn(2+)-binding residues include His341 and His347. The Ca(2+) site is built by Cys392 and Asn395. A propeptide spanning residues 398–413 is cleaved from the precursor; the sequence is LRTDTVSTPVSGNELL. The 74-residue stretch at 405–478 folds into the Disintegrin domain; sequence TPVSGNELLQ…SDCPRNPYKD (74 aa). Disulfide bonds link Cys420–Cys443, Cys434–Cys440, Cys439–Cys464, and Cys452–Cys471. A Cell attachment site; atypical (VGD) motif is present at residues 456-458; the sequence is VGD.

This sequence belongs to the venom metalloproteinase (M12B) family. P-II subfamily. P-IIe sub-subfamily. Monomer (metalloproteinase). Heterodimer; disulfide-linked (disintegrin). Requires Zn(2+) as cofactor. As to expression, expressed by the venom gland.

It localises to the secreted. With respect to regulation, fibrinolytic and caseinolytic activities are inhibited by Cd(2+), Cu(2+) and Co(2+) ions. Not inhibited by Mg(2+), Ca(2+) and Ba(2+). Also inhibited by EDTA, EGTA and 1,10-phenanthroline. Its function is as follows. Fibrinolytic and fibrinogenolytic metalloproteinase that hydrolyzes the Aalpha-chain and more slowly the Bbeta-chain of fibrin and fibrinogen. Its fibrinolytic activity is direct, without any plasminogen activation. Also hydrolyzes casein and B-chain of oxidized insulin. Inhibits ADP-induced and collagen-induced platelet aggregation. Shows low hemorrhagic activity. Cleaves the plasma proteinase inhibitors alpha(2)-macroglobulin (A2M) and pregnancy zone protein (PZP), and is inhibited by them. The metalloprotease has no strict P1-P1' specificity requirement. Hydrolysis at sites with a Pro residue at P1 is observed with bradykinin, substance P, PZP and alpha chain fibrinogen (FGA). Poor inhibitor of platelet aggregation. The disintegrin inhibits the adhesion of the alpha-4/beta-1 (ITGA4/ITGB1) integrin to VCAM-1. Inhibition on alpha-2b/beta-3 (ITGA2B/ITGB3) is low. The protein is Zinc metalloproteinase/disintegrin of Macrovipera lebetinus (Levantine viper).